Reading from the N-terminus, the 471-residue chain is Abscission/NoCut checkpoint regulator (471 aa).

The segment at 39 to 64 (GGAGQGREGRSWGEGPRGPGLGRRDL) is disordered. The segment at 74–133 (ATMESRCYGCAVKFTLFKKEYGCKNCGRAFCSGCLSFSAAVPRTGNTQQKVCKQCHEVLT) adopts an FYVE-type zinc-finger fold. Residues cysteine 80, cysteine 83, cysteine 96, cysteine 99, cysteine 104, cysteine 107, cysteine 125, and cysteine 128 each coordinate Zn(2+). Position 144 is a phosphoserine (serine 144). The MIM1-A signature appears at 174–187 (DQMIAERLARLRQE). A Glycyl lysine isopeptide (Lys-Gly) (interchain with G-Cter in SUMO2) cross-link involves residue lysine 207. The residue at position 243 (threonine 243) is a Phosphothreonine. The segment at 271-299 (KGGGPAASLQNDLNQGGPGSTNSKRQANW) is disordered. The segment covering 278 to 299 (SLQNDLNQGGPGSTNSKRQANW) has biased composition (polar residues). Glycine 286 and serine 293 each carry phosphoserine. The stretch at 311–375 (EAALELREEN…RVLQQLTEEA (65 aa)) forms a coiled coil. Positions 326–339 (ILALAKRLAMLRGQ) match the MIM1-B motif. Serine 354 bears the Phosphoserine mark. The segment at 386–412 (PAEQASRPWTQPRGAEPEAQDVDPRPE) is disordered. A Phosphoserine modification is found at serine 463.

In terms of assembly, interacts (via MIM1-B) with VPS4A; interaction takes place at the midbody ring following cytokinesis checkpoint activation. In terms of processing, phosphorylated in vitro at Ser-22 by AURKB; however, phosphorylation at this site could not be confirmed in vivo. In terms of tissue distribution, detected in brain, heart, skeletal muscle and kidney. Expressed in the liver (at protein level).

It localises to the cytoplasm. Its subcellular location is the cytoskeleton. The protein localises to the microtubule organizing center. The protein resides in the centrosome. It is found in the cleavage furrow. It localises to the midbody. Its subcellular location is the midbody ring. Key regulator of abscission step in cytokinesis: part of the cytokinesis checkpoint, a process required to delay abscission to prevent both premature resolution of intercellular chromosome bridges and accumulation of DNA damage. Together with CHMP4C, required to retain abscission-competent VPS4 (VPS4A and/or VPS4B) at the midbody ring until abscission checkpoint signaling is terminated at late cytokinesis. Deactivation of AURKB results in dephosphorylation of CHMP4C followed by its dissociation from ZFYVE19/ANCHR and VPS4 and subsequent abscission. The chain is Abscission/NoCut checkpoint regulator (ZFYVE19) from Homo sapiens (Human).